The sequence spans 359 residues: Aromatic amino acid aminotransferase (359 aa).

Position 223 is an N6-(pyridoxal phosphate)lysine (lysine 223).

It belongs to the class-II pyridoxal-phosphate-dependent aminotransferase family. In terms of assembly, homodimer. Requires pyridoxal 5'-phosphate as cofactor.

The enzyme catalyses an aromatic L-alpha-amino acid + 2-oxoglutarate = an aromatic oxo-acid + L-glutamate. In terms of biological role, aminotransferase that catalyzes the conversion of aromatic amino acids and 2-oxoglutarate into corresponding aromatic oxo acids and L-glutamate. This is Aromatic amino acid aminotransferase from Streptomyces avermitilis (strain ATCC 31267 / DSM 46492 / JCM 5070 / NBRC 14893 / NCIMB 12804 / NRRL 8165 / MA-4680).